The following is a 425-amino-acid chain: Serine--tRNA ligase (425 aa).

L-serine is bound at residue 227-229 (TAE). ATP contacts are provided by residues 258–260 (RRE) and valine 274. Residue glutamate 281 coordinates L-serine. 347-350 (ETHS) lines the ATP pocket. Residue threonine 382 participates in L-serine binding.

The protein belongs to the class-II aminoacyl-tRNA synthetase family. Type-1 seryl-tRNA synthetase subfamily. Homodimer. The tRNA molecule binds across the dimer.

The protein resides in the cytoplasm. It catalyses the reaction tRNA(Ser) + L-serine + ATP = L-seryl-tRNA(Ser) + AMP + diphosphate + H(+). The catalysed reaction is tRNA(Sec) + L-serine + ATP = L-seryl-tRNA(Sec) + AMP + diphosphate + H(+). Its pathway is aminoacyl-tRNA biosynthesis; selenocysteinyl-tRNA(Sec) biosynthesis; L-seryl-tRNA(Sec) from L-serine and tRNA(Sec): step 1/1. Catalyzes the attachment of serine to tRNA(Ser). Is also able to aminoacylate tRNA(Sec) with serine, to form the misacylated tRNA L-seryl-tRNA(Sec), which will be further converted into selenocysteinyl-tRNA(Sec). The polypeptide is Serine--tRNA ligase (Deinococcus radiodurans (strain ATCC 13939 / DSM 20539 / JCM 16871 / CCUG 27074 / LMG 4051 / NBRC 15346 / NCIMB 9279 / VKM B-1422 / R1)).